Here is a 557-residue protein sequence, read N- to C-terminus: MRSDMIKKGFDKAPHRSLLKATGLKDEDFDKPFIAICNSFIEIIPGHKHLNEFGKLVKEAVRAAGMVPFEFNTIGVDDGIAMGHIGMRYSLPSREIIADSVETVVNAHWFDGMICIPNCDKITPGMMMAALRINIPTVFVSGGPMAAGKTSKGEVVDLSSVFEGVGAYQSGKISEEELKDIEDHGCPSCGSCSGMFTANSMNCLCEVLGLALPGNGSILAIDPRREELIKQAAEKLKILIERDIKPRDIVTEEAIDDAFALDMAMGGSTNTVLHTLALAQEAGLDYDMNRIDAVSRRVPHLCKVSPASNWHMEDIDRAGGISAILKEISRKEGVLHLDRITATGQTLRENIAHAEIKDKEVIHSLENPHSEEGGLRILKGNLAKDGAVIKSGATEVKRFEGPCVIFNSQDEALAGIMLGKVKKGDVVVIRYEGPRGGPGMPEMLAPTSAIAGMGLGADVALLTDGRFSGASRGISVGHISPEAAAGGTIALLEQGDIVCIDVEERLLEVRVSDEELDKRKKEWKRPEAKVKTGWLGRYAQMVTSANTGAVLKIPDFD.

A Mg(2+)-binding site is contributed by D78. C119 serves as a coordination point for [2Fe-2S] cluster. Positions 120 and 121 each coordinate Mg(2+). N6-carboxylysine is present on K121. C192 contacts [2Fe-2S] cluster. E442 provides a ligand contact to Mg(2+). Catalysis depends on S468, which acts as the Proton acceptor.

The protein belongs to the IlvD/Edd family. Homodimer. Requires [2Fe-2S] cluster as cofactor. It depends on Mg(2+) as a cofactor.

It carries out the reaction (2R)-2,3-dihydroxy-3-methylbutanoate = 3-methyl-2-oxobutanoate + H2O. The catalysed reaction is (2R,3R)-2,3-dihydroxy-3-methylpentanoate = (S)-3-methyl-2-oxopentanoate + H2O. The protein operates within amino-acid biosynthesis; L-isoleucine biosynthesis; L-isoleucine from 2-oxobutanoate: step 3/4. Its pathway is amino-acid biosynthesis; L-valine biosynthesis; L-valine from pyruvate: step 3/4. In terms of biological role, functions in the biosynthesis of branched-chain amino acids. Catalyzes the dehydration of (2R,3R)-2,3-dihydroxy-3-methylpentanoate (2,3-dihydroxy-3-methylvalerate) into 2-oxo-3-methylpentanoate (2-oxo-3-methylvalerate) and of (2R)-2,3-dihydroxy-3-methylbutanoate (2,3-dihydroxyisovalerate) into 2-oxo-3-methylbutanoate (2-oxoisovalerate), the penultimate precursor to L-isoleucine and L-valine, respectively. This is Dihydroxy-acid dehydratase from Bacillus cereus (strain G9842).